Here is a 234-residue protein sequence, read N- to C-terminus: tRNA1(Val) (adenine(37)-N6)-methyltransferase (234 aa).

Belongs to the methyltransferase superfamily. tRNA (adenine-N(6)-)-methyltransferase family.

It localises to the cytoplasm. The enzyme catalyses adenosine(37) in tRNA1(Val) + S-adenosyl-L-methionine = N(6)-methyladenosine(37) in tRNA1(Val) + S-adenosyl-L-homocysteine + H(+). Functionally, specifically methylates the adenine in position 37 of tRNA(1)(Val) (anticodon cmo5UAC). This chain is tRNA1(Val) (adenine(37)-N6)-methyltransferase, found in Aliivibrio fischeri (strain ATCC 700601 / ES114) (Vibrio fischeri).